A 521-amino-acid polypeptide reads, in one-letter code: Cytochrome P450 monooxygenase astF (521 aa).

Residues 14–34 traverse the membrane as a helical segment; that stretch reads TMATFLLPVAIGTIILLFLYG. 4 N-linked (GlcNAc...) asparagine glycosylation sites follow: Asn198, Asn218, Asn268, and Asn281. Residue Cys430 coordinates heme.

This sequence belongs to the cytochrome P450 family. Heme serves as cofactor.

It is found in the membrane. Its pathway is secondary metabolite biosynthesis; terpenoid biosynthesis. In terms of biological role, cytochrome P450 monooxygenase; part of the gene cluster that mediates the biosynthesis of astellolides, drimane-type sesquiterpene esters that show antimicrobial, anti-inflammatory, and anti-tumor activities. The first step in astellolide biosynthesis is performed by the sesquiterpene cyclase astC that catalyzes the formation of drimanyl pyrophosphate from farnesyl pyrophosphate. Drimanyl pyrophosphate is then dephosphorylated by the sesquiterpene phosphatase astI to produce drimanyl monophosphate which is further dephosphorylated to drim-8-ene-11-ol by atsK. Drim-8-ene-11-ol is converted to confertifolin, probably by the cytochrome P450 monooxygenase astD and/or the dehydrogenase astE. The cytochrome P450 monooxygenases astB, astF and astJ then hydroxylate confertifolin at C6, C14, or C15 to form trihydroxy confertifolin. The nonribosomal peptide synthetase astA catalyzes ester bond formation between trihydroxy contifolin and benzoic acid (BA) or 4-hydroxy benzoic acid (4HBA), leading to the formation of dideacetyl astellolides A and B, respectively. Finally, the O-acetyltransferase astG converts dideacetyl astellolides A and B into deacetyl astellolides A and B. This chain is Cytochrome P450 monooxygenase astF, found in Aspergillus oryzae (strain ATCC 42149 / RIB 40) (Yellow koji mold).